Consider the following 226-residue polypeptide: 7-cyano-7-deazaguanine synthase (226 aa).

ATP is bound at residue 10–20 (LSGGLDSATAA). Residues Cys-191, Cys-199, Cys-202, and Cys-205 each coordinate Zn(2+).

The protein belongs to the QueC family. The cofactor is Zn(2+).

It carries out the reaction 7-carboxy-7-deazaguanine + NH4(+) + ATP = 7-cyano-7-deazaguanine + ADP + phosphate + H2O + H(+). The protein operates within purine metabolism; 7-cyano-7-deazaguanine biosynthesis. Catalyzes the ATP-dependent conversion of 7-carboxy-7-deazaguanine (CDG) to 7-cyano-7-deazaguanine (preQ(0)). This is 7-cyano-7-deazaguanine synthase from Synechococcus sp. (strain CC9311).